A 265-amino-acid chain; its full sequence is Hemin import ATP-binding protein HmuV (265 aa).

One can recognise an ABC transporter domain in the interval 13–249; sequence LKASNLHLQL…TAVENVYGWP (237 aa). An ATP-binding site is contributed by 45–52; the sequence is GPNGAGKS.

The protein belongs to the ABC transporter superfamily. Heme (hemin) importer (TC 3.A.1.14.5) family. In terms of assembly, the complex is composed of two ATP-binding proteins (HmuV), two transmembrane proteins (HmuU) and a solute-binding protein (HmuT).

It localises to the cell inner membrane. Its function is as follows. Part of the ABC transporter complex HmuTUV involved in hemin import. Responsible for energy coupling to the transport system. This chain is Hemin import ATP-binding protein HmuV, found in Photobacterium damsela subsp. piscicida (Pasteurella piscicida).